The sequence spans 229 residues: Secreted RxLR effector protein PITG_22926 (229 aa).

Positions 1–23 are cleaved as a signal peptide; it reads MRCNHTLCVVAITFLVSWSQTLS. The short motif at 34-45 is the RxLR-dEER element; sequence PLVRSVSATEER.

The protein belongs to the RxLR effector family.

It is found in the secreted. It localises to the host nucleus. Functionally, secreted effector that acts as a RNA silencing suppressor, probably by inhibiting the biogenesis of small RNAs in the host plant, to manipulate host immune responses and promote Phytophthora infection. The sequence is that of Secreted RxLR effector protein PITG_22926 from Phytophthora infestans (strain T30-4) (Potato late blight agent).